Here is a 123-residue protein sequence, read N- to C-terminus: Small ribosomal subunit protein uS12 (123 aa).

Position 89 is a 3-methylthioaspartic acid (Asp-89).

The protein belongs to the universal ribosomal protein uS12 family. In terms of assembly, part of the 30S ribosomal subunit. Contacts proteins S8 and S17. May interact with IF1 in the 30S initiation complex.

In terms of biological role, with S4 and S5 plays an important role in translational accuracy. Functionally, interacts with and stabilizes bases of the 16S rRNA that are involved in tRNA selection in the A site and with the mRNA backbone. Located at the interface of the 30S and 50S subunits, it traverses the body of the 30S subunit contacting proteins on the other side and probably holding the rRNA structure together. The combined cluster of proteins S8, S12 and S17 appears to hold together the shoulder and platform of the 30S subunit. The chain is Small ribosomal subunit protein uS12 from Anaeromyxobacter dehalogenans (strain 2CP-1 / ATCC BAA-258).